Reading from the N-terminus, the 82-residue chain is UPF0213 protein SERP0126 (82 aa).

Positions 2-77 constitute a GIY-YIG domain; sequence DKHFVYIVKC…KTYTRQQKLK (76 aa).

This sequence belongs to the UPF0213 family.

The sequence is that of UPF0213 protein SERP0126 from Staphylococcus epidermidis (strain ATCC 35984 / DSM 28319 / BCRC 17069 / CCUG 31568 / BM 3577 / RP62A).